We begin with the raw amino-acid sequence, 404 residues long: Glucose-1-phosphate adenylyltransferase (404 aa).

Residues Tyr99, Gly164, 179–180, and Ser197 contribute to the alpha-D-glucose 1-phosphate site; that span reads EK.

It belongs to the bacterial/plant glucose-1-phosphate adenylyltransferase family.

It catalyses the reaction alpha-D-glucose 1-phosphate + ATP + H(+) = ADP-alpha-D-glucose + diphosphate. Its pathway is glycan biosynthesis; glycogen biosynthesis. Functionally, involved in the biosynthesis of ADP-glucose building block, required in the biosynthesis of maltose-1-phosphate (M1P) and in the elongation reactions to produce linear alpha-1,4-glucans. Catalyzes the reaction between ATP and alpha-D-glucose 1-phosphate (G1P) to produce pyrophosphate and ADP-Glc. This chain is Glucose-1-phosphate adenylyltransferase, found in Mycolicibacterium smegmatis (strain ATCC 700084 / mc(2)155) (Mycobacterium smegmatis).